The sequence spans 493 residues: Glutamyl-tRNA(Gln) amidotransferase subunit A (493 aa).

Residues Lys-79 and Ser-159 each act as charge relay system in the active site. The active-site Acyl-ester intermediate is Ser-183.

This sequence belongs to the amidase family. GatA subfamily. Heterotrimer of A, B and C subunits.

It catalyses the reaction L-glutamyl-tRNA(Gln) + L-glutamine + ATP + H2O = L-glutaminyl-tRNA(Gln) + L-glutamate + ADP + phosphate + H(+). Allows the formation of correctly charged Gln-tRNA(Gln) through the transamidation of misacylated Glu-tRNA(Gln) in organisms which lack glutaminyl-tRNA synthetase. The reaction takes place in the presence of glutamine and ATP through an activated gamma-phospho-Glu-tRNA(Gln). This Brucella melitensis biotype 2 (strain ATCC 23457) protein is Glutamyl-tRNA(Gln) amidotransferase subunit A.